A 179-amino-acid chain; its full sequence is MVAATVNLANMTWTSLNSNPAISFSMLSGIRNLGMLPFRRCLKPTVIGIASWPPLRCSSVKAMSSSSSSSGSTLEETVKTTVAENPVVVYSKTWCSYSSQVKSLFKSLQVEPLVVELDQLGSEGSQLQNVLEKITGQYTVPNVFIGGKHIGGCSDTLQLHNKGELEAILAEANGKNGQT.

The transit peptide at 1–61 directs the protein to the chloroplast; sequence MVAATVNLAN…WPPLRCSSVK (61 aa). Residue alanine 62 is modified to N-acetylalanine. The region spanning 75–176 is the Glutaredoxin domain; it reads EETVKTTVAE…AILAEANGKN (102 aa). Residue cysteine 95 coordinates [2Fe-2S] cluster.

This sequence belongs to the glutaredoxin family. CPYC subfamily.

Its subcellular location is the plastid. It localises to the chloroplast. In terms of biological role, may only reduce GSH-thiol disulfides, but not protein disulfides. In Arabidopsis thaliana (Mouse-ear cress), this protein is Monothiol glutaredoxin-S12, chloroplastic (GRXS12).